The following is a 281-amino-acid chain: 2-dehydro-3-deoxyphosphooctonate aldolase (281 aa).

It belongs to the KdsA family.

It is found in the cytoplasm. The catalysed reaction is D-arabinose 5-phosphate + phosphoenolpyruvate + H2O = 3-deoxy-alpha-D-manno-2-octulosonate-8-phosphate + phosphate. The protein operates within carbohydrate biosynthesis; 3-deoxy-D-manno-octulosonate biosynthesis; 3-deoxy-D-manno-octulosonate from D-ribulose 5-phosphate: step 2/3. It participates in bacterial outer membrane biogenesis; lipopolysaccharide biosynthesis. This chain is 2-dehydro-3-deoxyphosphooctonate aldolase, found in Pseudomonas aeruginosa (strain UCBPP-PA14).